The primary structure comprises 898 residues: Sodium/hydrogen exchanger 5 (898 aa).

The Cytoplasmic segment spans residues 1–3 (MLR). A helical transmembrane segment spans residues 4–24 (VALLLLPGLPLAGVGATEEPT). The Extracellular portion of the chain corresponds to 25–47 (QEPGPLGEPPGLALFRWQWHEVE). A helical transmembrane segment spans residues 48 to 68 (APYLVALWILVASLAKIVFHL). The Cytoplasmic portion of the chain corresponds to 69 to 75 (SRKVTSL). A helical membrane pass occupies residues 76–96 (VPESCLLILLGLALGGIVLAV). The Extracellular portion of the chain corresponds to 97–136 (AKKAEYQLEPGTFFLFLLPPIVLDSGYFMPSRLFFDNLGA). A helical membrane pass occupies residues 137 to 157 (ILTYAVVGTLWNAFTTGVALW). Over 158-175 (GLQQAGLVAPRVQAGLLD) the chain is Cytoplasmic. A helical membrane pass occupies residues 176–196 (FLLFGSLISAVDPVAVLAVFE). Residues 197–202 (EVHVNE) lie on the Extracellular side of the membrane. A glycan (N-linked (GlcNAc...) asparagine) is linked at Asn201. The helical transmembrane segment at 203-223 (TLFIIVFGESLLNDAVTVVLY) threads the bilayer. Residues 224–248 (KVCNSFVEMGSANVQATDYLKGVAS) are Cytoplasmic-facing. A helical transmembrane segment spans residues 249–269 (LFVVSLGGAAVGLVFAFLLAL). The Extracellular portion of the chain corresponds to 270-278 (TTRFTKRVR). The helical transmembrane segment at 279 to 299 (IIEPLLVFLLAYAAYLTAEMA) threads the bilayer. The Cytoplasmic segment spans residues 300–333 (SLSAILAVTMCGLGCKKYVEANISHKSRTAVKYT). Residues 334-354 (MKTLASSAETVIFMLLGISAV) form a helical membrane-spanning segment. Over 355–362 (DSSKWAWD) the chain is Extracellular. Residues 363–383 (SGLVLGTLFFILFFRALGVVL) traverse the membrane as a helical segment. The Cytoplasmic segment spans residues 384-400 (QTWVLNQFRLVPLDKID). A helical membrane pass occupies residues 401–421 (QVVMSYGGLRGAVAFALVILL). Residues 422 to 430 (DRTKVPAKD) are Extracellular-facing. The chain crosses the membrane as a helical span at residues 431-451 (YFVATTIVVVFFTVIVQGLTI). Residues 452–898 (KPLVKWLRVK…CIQFNRGGRL (447 aa)) lie on the Cytoplasmic side of the membrane. Disordered stretches follow at residues 660-692 (TKSKPRPRKTGHKKKDGVANPEATNGKPPRDLG) and 801-888 (ESLA…NSHW). Positions 662–674 (SKPRPRKTGHKKK) are enriched in basic residues. Polar residues predominate over residues 856 to 867 (ESSADIPQQQEL).

It belongs to the monovalent cation:proton antiporter 1 (CPA1) transporter (TC 2.A.36) family. As to quaternary structure, interacts with CHP1 and CHP2. Interacts with ARRB2; facilitates the endocytosis of SLC9A5 from the plasma membrane. Interacts with RACK1; this interaction positively regulates SLC9A5 activity and promotes SLC9A5 localization to focal adhesions. Interacts with SCAMP2; this interaction regulates SLC9A5 cell-surface targeting and SLC9A5 activity. In terms of processing, phosphorylated by PRKAA2; promotes its accumulation at the cell surface. Phosphorylated by CSNK2A1 in a manner favoring its beta-arrestin binding and endocytosis. Highly expressed in brain. Strongly expressed in the dentate gyrus.

The protein localises to the cell membrane. Its subcellular location is the recycling endosome membrane. It is found in the cell projection. It localises to the dendritic spine membrane. The protein resides in the synaptic cell membrane. The protein localises to the cell junction. Its subcellular location is the focal adhesion. The catalysed reaction is Na(+)(in) + H(+)(out) = Na(+)(out) + H(+)(in). In terms of biological role, plasma membrane Na(+)/H(+) antiporter. Mediates the electroneutral exchange of intracellular H(+) ions for extracellular Na(+) in 1:1 stoichiometry. Responsible for regulating intracellular pH homeostasis, in particular in neural tissues. Acts as a negative regulator of dendritic spine growth. Plays a role in postsynaptic remodeling and signaling. Can also contribute to organellar pH regulation, with consequences for receptor tyrosine kinase trafficking. The sequence is that of Sodium/hydrogen exchanger 5 (Slc9a5) from Rattus norvegicus (Rat).